Reading from the N-terminus, the 207-residue chain is Claudin-11 (207 aa).

Residue methionine 1 is a topological domain, cytoplasmic. A helical membrane pass occupies residues 2-22 (VATCLQVVGFVTSFVGWIGII). Residues 23–82 (VTTSTNDWVVTCGYTIPTCRKLDELGSKGLWADCVMATGLYHCKPLVDILILPGYVQACR) are Extracellular-facing. The helical transmembrane segment at 83 to 103 (ALMIAASVLGLPAILLLLTVL) threads the bilayer. At 104–122 (PCIRMGHEPGVAKYRRAQL) the chain is on the cytoplasmic side. Residues 123–143 (AGVMLVLVALCAMVATIWFPV) traverse the membrane as a helical segment. The Extracellular segment spans residues 144-157 (CAHRETTIVSFGYS). Residues 158–178 (LYAGWIGAVLCLVGGCVIVCC) traverse the membrane as a helical segment. The Cytoplasmic portion of the chain corresponds to 179–207 (AGDAQAFGENRFYYSSGSSSPTHAKSAHV). Phosphoserine is present on residues serine 193, serine 194, serine 197, and serine 198.

Belongs to the claudin family. Interacts with tetraspanin-3/TSPAN3. Interacts with OCLN.

Its subcellular location is the cell junction. It localises to the tight junction. It is found in the cell membrane. In terms of biological role, plays a major role in tight junction-specific obliteration of the intercellular space, through calcium-independent cell-adhesion activity. The chain is Claudin-11 (CLDN11) from Bos taurus (Bovine).